The chain runs to 1321 residues: Insulin receptor substrate 2 (1321 aa).

A compositionally biased stretch (pro residues) spans 1-10; it reads MASAPLPGPP. 2 disordered regions span residues 1-32 and 51-73; these read MASAPLPGPPASAGGDGPNLNNNNNNNNHSVR and RGPGTGGDEASAAGGSPPQPPRL. Residues 16–144 form the PH domain; it reads DGPNLNNNNN…WYRALTDLVS (129 aa). Residues 18–28 are compositionally biased toward low complexity; that stretch reads PNLNNNNNNNN. The region spanning 191-295 is the IRS-type PTB domain; that stretch reads YREVWQVNLK…EAMKALKELF (105 aa). Positions 299-536 are disordered; it reads PRSKSQSSGS…ARDGSGGELY (238 aa). A phosphoserine mark is found at Ser303 and Ser343. Thr347 carries the post-translational modification Phosphothreonine. A Phosphoserine modification is found at Ser362. The segment covering 364-376 has biased composition (gly residues); that stretch reads GDGGAAGGAGTAG. A phosphoserine mark is found at Ser381, Ser385, and Ser388. Arg409 carries the post-translational modification Omega-N-methylarginine. 2 stretches are compositionally biased toward low complexity: residues 435–456 and 478–490; these read SPPAATSPGSLSSSSGHGSGSY and PSSGSASASGSPS. The residue at position 517 (Thr517) is a Phosphothreonine. Phosphoserine is present on Ser520. Position 524 is a phosphothreonine (Thr524). The residue at position 536 (Tyr536) is a Phosphotyrosine; by INSR. The short motif at 536–539 is the YXXM motif 1 element; the sequence is YGYM. Residue Ser556 is modified to Phosphoserine; by PLK1. A Phosphoserine modification is found at Ser573. Phosphothreonine occurs at positions 575 and 576. Ser590 carries the post-translational modification Phosphoserine. A YXXM motif 2 motif is present at residues 594–597; sequence YTLM. Phosphoserine occurs at positions 604 and 616. Position 649 is a phosphotyrosine (Tyr649). Short sequence motifs (YXXM motif) lie at residues 649–652 and 671–674; these read YMPM. Tyr671 carries the phosphotyrosine; by INSR modification. Phosphoserine is present on residues Ser675, Ser678, Ser727, and Ser728. The YXXM motif 5 signature appears at 734–737; sequence YMRM. Ser762 bears the Phosphoserine mark. Thr771 is modified (phosphothreonine). Ser796 is subject to Phosphoserine. Residues 814 to 817 carry the YXXM motif 6 motif; that stretch reads YVLM. A Phosphoserine modification is found at Ser819. Disordered stretches follow at residues 834–871 and 888–1091; these read ATPGAGTFGAAGGSHTQPHHSAVPSSMRPSAIGGRPEG and EGLQ…ASPT. Position 907 is a phosphoserine (Ser907). Tyr911 carries the phosphotyrosine; by INSR modification. A compositionally biased stretch (low complexity) spans 930–959; that stretch reads LLASAASSSSLLSASSPASSLGSGTPGTSS. Ser965 is modified (phosphoserine). A Phosphotyrosine; by INSR modification is found at Tyr970. Positions 1005–1014 are enriched in pro residues; that stretch reads PYPPLPPRPS. A compositionally biased stretch (polar residues) spans 1039–1055; it reads AATSQGPTAGSSMSSEP. The YXXM motif 7 motif lies at 1061 to 1064; the sequence is YTEM. Thr1071 is modified (phosphothreonine). Residues 1072 to 1082 are compositionally biased toward pro residues; the sequence is PPQPIVAPPKP. Residue Ser1089 is modified to Phosphoserine. Position 1098 is a phosphoserine; by PLK1 (Ser1098). Positions 1110–1198 are disordered; that stretch reads LQVSQPPDPH…TSPGQAQPLV (89 aa). A compositionally biased stretch (low complexity) spans 1139–1154; that stretch reads ETFSSTTTVTPVSPSF. Thr1148 is subject to Phosphothreonine. Residues Ser1151, Ser1163, Ser1165, Ser1175, and Ser1190 each carry the phosphoserine modification. A compositionally biased stretch (polar residues) spans 1163–1179; that stretch reads SASVENVSLRKSSEGSS. Phosphotyrosine; by INSR is present on Tyr1242. Residues 1251 to 1275 form a disordered region; that stretch reads QGSLAQSQPQPGDKNSWSRTRSLGG. A compositionally biased stretch (polar residues) spans 1253–1271; sequence SLAQSQPQPGDKNSWSRTR. Tyr1303 bears the Phosphotyrosine; by INSR mark. Residue Lys1314 forms a Glycyl lysine isopeptide (Lys-Gly) (interchain with G-Cter in ubiquitin) linkage.

As to quaternary structure, interacts with PHIP. Interacts with SH2B1; this interaction enhances leptin-induced activation of the PI3-kinase pathway. Interacts with GRB2. Interacts with PIK3R1. Interacts with DVL2; this interaction promotes the Wnt/beta-catenin signaling pathway. Phosphorylation fluctuates in a cell-cycle dependent manner with hyperphosphorylation during mitosis. Phosphorylated at Ser-556 and Ser-1098 by PLK1; these phosphorylations prevent the activation of the PI3K pathway upon growth factor stimulation by inhibiting the binding between IRS2 and the PI3K pathway components and increasing the level of IRS2 protein degradation. In addition, they prevent premature mitotic exit. Post-translationally, monoubiquitinated by NEDD4; leading to enhanced IGF1 signaling. During cell cycle, ubiquitination and proteasomal degradation are controlled by FZR1. In terms of tissue distribution, skeletal muscle, lung, brain, liver, kidney, heart and spleen.

It is found in the cytoplasm. The protein localises to the cytosol. Functionally, signaling adapter protein that participates in the signal transduction from two prominent receptor tyrosine kinases, insulin receptor/INSR and insulin-like growth factor I receptor/IGF1R. Plays therefore an important role in development, growth, glucose homeostasis as well as lipid metabolism. Upon phosphorylation by the insulin receptor, functions as a signaling scaffold that propagates insulin action through binding to SH2 domain-containing proteins including the p85 regulatory subunit of PI3K, NCK1, NCK2, GRB2 or SHP2. Recruitment of GRB2 leads to the activation of the guanine nucleotide exchange factor SOS1 which in turn triggers the Ras/Raf/MEK/MAPK signaling cascade. Activation of the PI3K/AKT pathway is responsible for most of insulin metabolic effects in the cell, and the Ras/Raf/MEK/MAPK is involved in the regulation of gene expression and in cooperation with the PI3K pathway regulates cell growth and differentiation. Acts a positive regulator of the Wnt/beta-catenin signaling pathway through suppression of DVL2 autophagy-mediated degradation leading to cell proliferation. Plays a role in cell cycle progression by promoting a robust spindle assembly checkpoint (SAC) during M-phase. In macrophages, IL4-induced tyrosine phosphorylation of IRS2 leads to the recruitment and activation of phosphoinositide 3-kinase (PI3K). This chain is Insulin receptor substrate 2 (Irs2), found in Mus musculus (Mouse).